Consider the following 362-residue polypeptide: Protein-glutamate methylesterase/protein-glutamine glutaminase (362 aa).

Residues 5–122 form the Response regulatory domain; sequence KVLCVDDSAL…RDGMLDYSEK (118 aa). Position 56 is a 4-aspartylphosphate (Asp56). In terms of domain architecture, CheB-type methylesterase spans 163 to 355; that stretch reads LLSTEKLIIV…RRVMARLSSM (193 aa). Residues Ser175, His201, and Asp297 contribute to the active site.

Belongs to the CheB family. Post-translationally, phosphorylated by CheA. Phosphorylation of the N-terminal regulatory domain activates the methylesterase activity.

The protein localises to the cytoplasm. It catalyses the reaction [protein]-L-glutamate 5-O-methyl ester + H2O = L-glutamyl-[protein] + methanol + H(+). It carries out the reaction L-glutaminyl-[protein] + H2O = L-glutamyl-[protein] + NH4(+). In terms of biological role, involved in chemotaxis. Part of a chemotaxis signal transduction system that modulates chemotaxis in response to various stimuli. Catalyzes the demethylation of specific methylglutamate residues introduced into the chemoreceptors (methyl-accepting chemotaxis proteins or MCP) by CheR. Also mediates the irreversible deamidation of specific glutamine residues to glutamic acid. This Paraburkholderia xenovorans (strain LB400) protein is Protein-glutamate methylesterase/protein-glutamine glutaminase.